The sequence spans 148 residues: Aspartate 1-decarboxylase (148 aa).

The active-site Schiff-base intermediate with substrate; via pyruvic acid is the Ser25. Ser25 bears the Pyruvic acid (Ser) mark. Substrate is bound at residue Thr57. Tyr58 acts as the Proton donor in catalysis. Substrate is bound at residue 73–75 (GAA).

The protein belongs to the PanD family. In terms of assembly, heterooctamer of four alpha and four beta subunits. Pyruvate serves as cofactor. In terms of processing, is synthesized initially as an inactive proenzyme, which is activated by self-cleavage at a specific serine bond to produce a beta-subunit with a hydroxyl group at its C-terminus and an alpha-subunit with a pyruvoyl group at its N-terminus.

It is found in the cytoplasm. The catalysed reaction is L-aspartate + H(+) = beta-alanine + CO2. The protein operates within cofactor biosynthesis; (R)-pantothenate biosynthesis; beta-alanine from L-aspartate: step 1/1. Catalyzes the pyruvoyl-dependent decarboxylation of aspartate to produce beta-alanine. The chain is Aspartate 1-decarboxylase from Rhodococcus opacus (strain B4).